The following is an 88-amino-acid chain: Small ribosomal subunit protein bS16c (88 aa).

It belongs to the bacterial ribosomal protein bS16 family.

It is found in the plastid. Its subcellular location is the chloroplast. In Gossypium hirsutum (Upland cotton), this protein is Small ribosomal subunit protein bS16c.